Reading from the N-terminus, the 149-residue chain is UPF0756 membrane protein Nther_1957 (149 aa).

The next 4 membrane-spanning stretches (helical) occupy residues 5–25 (IVVL…LVAT), 52–72 (LGIL…DIMP), 85–105 (LIAV…VELL), and 111–131 (VMVG…GVPA).

This sequence belongs to the UPF0756 family.

The protein resides in the cell membrane. This is UPF0756 membrane protein Nther_1957 from Natranaerobius thermophilus (strain ATCC BAA-1301 / DSM 18059 / JW/NM-WN-LF).